Consider the following 518-residue polypeptide: Glutamate--cysteine ligase (518 aa).

It belongs to the glutamate--cysteine ligase type 1 family. Type 1 subfamily.

The enzyme catalyses L-cysteine + L-glutamate + ATP = gamma-L-glutamyl-L-cysteine + ADP + phosphate + H(+). It functions in the pathway sulfur metabolism; glutathione biosynthesis; glutathione from L-cysteine and L-glutamate: step 1/2. This is Glutamate--cysteine ligase from Salmonella agona (strain SL483).